The primary structure comprises 195 residues: MIAVVDLGIGNLANVRKALGGVITSDPYAIEGAEKIVLPGVGNFGAVMEKLEPLRGVIIDAINDGKPLLGICLGLQLLFEGSEESPGKPGLGVFRGNVVRFQGVRVPHIGWNQVWQRKECPLFEGIKDGAYFYFVHSYYALPEEDVTVGVTDYESKGAKVVFTSAVCRDNVYAVQFHPEKSGRNGLRLLENFRRL.

Residues 1-195 enclose the Glutamine amidotransferase type-1 domain; that stretch reads MIAVVDLGIG…LRLLENFRRL (195 aa). The active-site Nucleophile is the Cys-72. Active-site residues include His-177 and Glu-179.

In terms of assembly, heterodimer of HisH and HisF.

Its subcellular location is the cytoplasm. The enzyme catalyses 5-[(5-phospho-1-deoxy-D-ribulos-1-ylimino)methylamino]-1-(5-phospho-beta-D-ribosyl)imidazole-4-carboxamide + L-glutamine = D-erythro-1-(imidazol-4-yl)glycerol 3-phosphate + 5-amino-1-(5-phospho-beta-D-ribosyl)imidazole-4-carboxamide + L-glutamate + H(+). The catalysed reaction is L-glutamine + H2O = L-glutamate + NH4(+). Its pathway is amino-acid biosynthesis; L-histidine biosynthesis; L-histidine from 5-phospho-alpha-D-ribose 1-diphosphate: step 5/9. In terms of biological role, IGPS catalyzes the conversion of PRFAR and glutamine to IGP, AICAR and glutamate. The HisH subunit catalyzes the hydrolysis of glutamine to glutamate and ammonia as part of the synthesis of IGP and AICAR. The resulting ammonia molecule is channeled to the active site of HisF. The polypeptide is Imidazole glycerol phosphate synthase subunit HisH (Thermococcus kodakarensis (strain ATCC BAA-918 / JCM 12380 / KOD1) (Pyrococcus kodakaraensis (strain KOD1))).